The sequence spans 145 residues: Large ribosomal subunit protein uL11 (145 aa).

This sequence belongs to the universal ribosomal protein uL11 family. As to quaternary structure, part of the ribosomal stalk of the 50S ribosomal subunit. Interacts with L10 and the large rRNA to form the base of the stalk. L10 forms an elongated spine to which L12 dimers bind in a sequential fashion forming a multimeric L10(L12)X complex. In terms of processing, one or more lysine residues are methylated.

In terms of biological role, forms part of the ribosomal stalk which helps the ribosome interact with GTP-bound translation factors. The polypeptide is Large ribosomal subunit protein uL11 (Rickettsia africae (strain ESF-5)).